The sequence spans 401 residues: Argininosuccinate synthase (401 aa).

Residues 9–17 (AYSGGLDTS) and Ala-35 each bind ATP. Tyr-86 contacts L-citrulline. Residue Gly-116 participates in ATP binding. L-aspartate-binding residues include Thr-118, Asn-122, and Asp-123. Asn-122 contributes to the L-citrulline binding site. Positions 126, 175, 184, 261, and 273 each coordinate L-citrulline.

The protein belongs to the argininosuccinate synthase family. Type 1 subfamily. In terms of assembly, homotetramer.

It localises to the cytoplasm. It carries out the reaction L-citrulline + L-aspartate + ATP = 2-(N(omega)-L-arginino)succinate + AMP + diphosphate + H(+). It functions in the pathway amino-acid biosynthesis; L-arginine biosynthesis; L-arginine from L-ornithine and carbamoyl phosphate: step 2/3. This is Argininosuccinate synthase from Aquifex aeolicus (strain VF5).